The following is a 46-amino-acid chain: Putative antitoxin VapB3 (46 aa).

It belongs to the UPF0165 family.

In terms of biological role, possibly the antitoxin component of a type II toxin-antitoxin (TA) system. Its cognate toxin is VapC3 (Potential). The chain is Putative antitoxin VapB3 (vapB3) from Pyrococcus furiosus (strain ATCC 43587 / DSM 3638 / JCM 8422 / Vc1).